The chain runs to 291 residues: MAGSLSEIKAKIISTEKTSKITSAMRMVSSAKLVRSEQAARDFQIYASKIRQITTDLLKSELTIGSDNPMLVSRPVKKTGYIVITSDKGLVGGYNSKILKSVMDMITEYHADGDYEIISIGSVGSDFFKARGMNVAFELRGLADQPSFEQVRQIISQSVDMFVNEIFDELYVCYNHHVNSLTSQVRVQQMLPISDLVADEAAEEGVTGFELEPNRHDILDQLLPQFTESLIYGAIIDAKTAEHAAGMTAMQTATDNAKNVINDLTIQYNRARQAAITQEITEIVAGANALE.

This sequence belongs to the ATPase gamma chain family. In terms of assembly, F-type ATPases have 2 components, CF(1) - the catalytic core - and CF(0) - the membrane proton channel. CF(1) has five subunits: alpha(3), beta(3), gamma(1), delta(1), epsilon(1). CF(0) has three main subunits: a, b and c.

It localises to the cell membrane. In terms of biological role, produces ATP from ADP in the presence of a proton gradient across the membrane. The gamma chain is believed to be important in regulating ATPase activity and the flow of protons through the CF(0) complex. In Streptococcus pyogenes serotype M3 (strain ATCC BAA-595 / MGAS315), this protein is ATP synthase gamma chain.